The following is a 340-amino-acid chain: CMP-sialic acid transporter 1 (340 aa).

Topologically, residues 1–5 are cytoplasmic; the sequence is MAATP. The helical transmembrane segment at 6–26 threads the bilayer; that stretch reads WYFVAVLLTILTSSQGILTTL. Residues 27-36 are Lumenal-facing; the sequence is SQSDGGYKYD. The chain crosses the membrane as a helical span at residues 37–57; sequence YATVPFLAEVFKLIISGLFLW. The Cytoplasmic portion of the chain corresponds to 58-78; the sequence is REMRTSSSTTSRITTDWKSVR. A helical membrane pass occupies residues 79-99; the sequence is LFVIPSLIYLIHNNVQFATLT. The Lumenal segment spans residues 100–102; it reads YVD. The helical transmembrane segment at 103–125 threads the bilayer; sequence TSTYQIMGNLKIVTTGILFRLFL. Residues 126–168 are Cytoplasmic-facing; the sequence is KRKLSKLQWMAIGLLAVGTTTSQVKGCGEASCDSLFTAPIQGY. The chain crosses the membrane as a helical span at residues 169–189; that stretch reads LLGILSAGLSALAGIYTEFLM. At 190 to 200 the chain is on the lumenal side; the sequence is KRNNDTLYWQN. Residues 201 to 217 form a helical membrane-spanning segment; sequence LQLYTFGSLFNVARLIA. The Cytoplasmic portion of the chain corresponds to 218–238; the sequence is DDFRHGFEKGPWWQRIFDGYS. The chain crosses the membrane as a helical span at residues 239-259; that stretch reads ITTWLVVLNLGSTGLLVSWLM. Residues 260-282 lie on the Lumenal side of the membrane; that stretch reads KYADNIVKVYSTSMAMLLTMVAS. A helical membrane pass occupies residues 283 to 303; it reads IYLFSFKPTLQLFLGIVICIM. The Cytoplasmic portion of the chain corresponds to 304 to 340; it reads SLHMYFAPPHTLVDLPVTNEAHAKTLKQVVVEEKTDS.

The protein belongs to the nucleotide-sugar transporter family. CMP-Sialate:CMP antiporter (TC 2.A.7.12) subfamily.

Its subcellular location is the golgi apparatus membrane. Essential protein. Sugar transporter involved in the transport of CMP-sialic acid from the cytoplasm into the Golgi. The protein is CMP-sialic acid transporter 1 of Arabidopsis thaliana (Mouse-ear cress).